We begin with the raw amino-acid sequence, 305 residues long: N-acetylneuraminate lyase A (305 aa).

Aceneuramate-binding residues include threonine 51 and threonine 52. Tyrosine 143 serves as the catalytic Proton donor. Lysine 173 acts as the Schiff-base intermediate with substrate in catalysis. Residues serine 175, glycine 197, aspartate 199, glutamate 200, and serine 216 each contribute to the aceneuramate site.

It belongs to the DapA family. NanA subfamily. Homotetramer.

The protein localises to the cytoplasm. The enzyme catalyses aceneuramate = aldehydo-N-acetyl-D-mannosamine + pyruvate. It participates in amino-sugar metabolism; N-acetylneuraminate degradation. In terms of biological role, catalyzes the cleavage of N-acetylneuraminic acid (sialic acid) to form pyruvate and N-acetylmannosamine via a Schiff base intermediate. It prevents sialic acids from being recycled and returning to the cell surface. Involved in the N-glycolylneuraminic acid (Neu5Gc) degradation pathway. The chain is N-acetylneuraminate lyase A (npl-a) from Xenopus laevis (African clawed frog).